The following is a 257-amino-acid chain: Triosephosphate isomerase (257 aa).

9 to 11 (NWK) serves as a coordination point for substrate. The active-site Electrophile is the histidine 97. Glutamate 169 serves as the catalytic Proton acceptor. Residues glycine 175, serine 214, and 235–236 (GG) contribute to the substrate site.

It belongs to the triosephosphate isomerase family. As to quaternary structure, homodimer.

Its subcellular location is the cytoplasm. It catalyses the reaction D-glyceraldehyde 3-phosphate = dihydroxyacetone phosphate. Its pathway is carbohydrate biosynthesis; gluconeogenesis. It participates in carbohydrate degradation; glycolysis; D-glyceraldehyde 3-phosphate from glycerone phosphate: step 1/1. Its function is as follows. Involved in the gluconeogenesis. Catalyzes stereospecifically the conversion of dihydroxyacetone phosphate (DHAP) to D-glyceraldehyde-3-phosphate (G3P). The protein is Triosephosphate isomerase of Vibrio cholerae serotype O1 (strain ATCC 39315 / El Tor Inaba N16961).